The following is a 530-amino-acid chain: MAEVNWQQLINQKRATREALIPEQWLLPATITSKVTPQSTASAFELLSEAGLLTEREIDITEKYTAVSLTAKIATGELSSYDVATAFCKRAAIVHQLTNSLTEIFFDKALERARWLDEYLSKEGKTVGPLHGLPITLKDMIHVKGQYSTMGFVGHLRHPPADENAVITDMLEAAGAVFYCKTNVPQTLFVCESFNNVFGRTLNPYKLCLSPGGSSSGEAAQLGLCGSIMGVGSDIAGSVRVPAIFTGVYGFRPTVNRLPWSKQAELALKGWQGVQPTLGPMARTAQDLTLFMKTIIQAEPWRYDSTALAIPWHDAPRKDKLTIGVWSQDPQFPVFPPIARTMASAVGRLRAAGHTIKIIEAPPTMKAMKIAMRWFALDQVNLPLKFVQDGAESPIADLDAMDPGKFLDPGYVADLSENISISADIHDYREEWAKIWREAGIDVLLCPASRGSAVPHGEFGPLMYTIPWNLLDFPSSVVPFGKADKTLDSKDGYDSTVVDGAPTGFQLVGWRFQDEQTLMATEVIADTLKA.

Catalysis depends on charge relay system residues Lys-138 and Ser-214. Substrate contacts are provided by residues Ser-214 and 235–238 (IAGS). Residue Ser-238 is the Acyl-ester intermediate of the active site.

The protein belongs to the amidase family.

The enzyme catalyses a monocarboxylic acid amide + H2O = a monocarboxylate + NH4(+). The protein operates within xenobiotic degradation. Functionally, amidase; part of the Fusarium detoxification of benzoxazolinone cluster 1 (FDB1) involved in the degradation of benzoxazolinones produced by the host plant. Maize, wheat, and rye produce the 2 benzoxazinone phytoanticipins 2,4-dihy-droxy-7-methoxy-1,4-benzoxazin-3-one (DIMBOA) and 2,4-dihydroxy-1,4-benzoxazin-3-one (DIBOA) that, due to their inherent instability once released, spontaneously degrade to the more stable corresponding benzoxazolinones, 6-methoxy-2-benzoxazolinone (MBOA) and 2-benzoxazolinone (BOA), respectively. The first step in the detoxification of benzoxazolinones involves the hydrolysis of the cyclic ester bond of benzoxazolinones by the FDB1 cluster gamma-lactamase MBL1 to aminophenols. MBL1 is able to convert BOA into 2-aminophenol (2-AP), as well as MBOA into 5-methoxy-2-aminophenol (2-AMP). The FDB2 cluster N-malonyltransferase FDB2/NAT1 then metabolizes aminophenols via N-malonylation to non-toxic malonamic acids. FDB2/NAT1 converts 2-AP into N-(2-hydroxyphenyl) malonamic acid (HPMA) and 2-AMP into N-(2-hydroxy-4-methoxyphenyl) malonamic acid (HMPMA). The duplicated dienlactone hydrolases DLH1 and DLH2 may provide redundant function for hydrolyzing the lactone moiety in the BOA molecule. The roles of the amidases an other enzymes encoded by the 2 FDB clusters have not been identified so far. The chain is Amidase FVEG_08295 from Gibberella moniliformis (strain M3125 / FGSC 7600) (Maize ear and stalk rot fungus).